Here is a 135-residue protein sequence, read N- to C-terminus: Large ribosomal subunit protein uL16c (135 aa).

The protein belongs to the universal ribosomal protein uL16 family. In terms of assembly, part of the 50S ribosomal subunit.

It localises to the plastid. The protein localises to the chloroplast. This chain is Large ribosomal subunit protein uL16c, found in Platanus occidentalis (Sycamore).